The following is a 322-amino-acid chain: MVTVLNTVNQSGRLRHPEKAHRPDNEVLKKPDWIRVKAPVSRGYGETREIVRSNKLVTVCEEAGCPNIGECWEKKHATFMIMGEICTRACAFCNISTGIPNALDPNEPENIAKAVKQMGLTHVVITSVDRDDLADGGAHHFAEVIKAVREAAPATTIEILTPDFLRKEGALEIVVKARPDVFNHNLETVPSKYLKVRPGARYFHSIRLLQRVKELDPTIFTKSGIMVGLGEERNEILQLMDDLRSADVDFMTIGQYLQPTRKHHPVIRFVKPDEFKSFETIGKTKGFLLVASSPLTRSSHHAGEDFAKLKAAREALYASRAS.

Positions 1–12 (MVTVLNTVNQSG) are enriched in polar residues. Residues 1 to 22 (MVTVLNTVNQSGRLRHPEKAHR) form a disordered region. The [4Fe-4S] cluster site is built by C60, C65, C71, C86, C90, C93, and S299. One can recognise a Radical SAM core domain in the interval 72-288 (WEKKHATFMI…ETIGKTKGFL (217 aa)).

This sequence belongs to the radical SAM superfamily. Lipoyl synthase family. It depends on [4Fe-4S] cluster as a cofactor.

The protein localises to the cytoplasm. It catalyses the reaction [[Fe-S] cluster scaffold protein carrying a second [4Fe-4S](2+) cluster] + N(6)-octanoyl-L-lysyl-[protein] + 2 oxidized [2Fe-2S]-[ferredoxin] + 2 S-adenosyl-L-methionine + 4 H(+) = [[Fe-S] cluster scaffold protein] + N(6)-[(R)-dihydrolipoyl]-L-lysyl-[protein] + 4 Fe(3+) + 2 hydrogen sulfide + 2 5'-deoxyadenosine + 2 L-methionine + 2 reduced [2Fe-2S]-[ferredoxin]. The protein operates within protein modification; protein lipoylation via endogenous pathway; protein N(6)-(lipoyl)lysine from octanoyl-[acyl-carrier-protein]: step 2/2. Functionally, catalyzes the radical-mediated insertion of two sulfur atoms into the C-6 and C-8 positions of the octanoyl moiety bound to the lipoyl domains of lipoate-dependent enzymes, thereby converting the octanoylated domains into lipoylated derivatives. This chain is Lipoyl synthase, found in Brucella abortus (strain S19).